The primary structure comprises 450 residues: ATP-dependent protease ATPase subunit HslU (450 aa).

Residues Val29, 71–76, Asp261, Glu328, and Arg400 contribute to the ATP site; that span reads GVGKTE.

The protein belongs to the ClpX chaperone family. HslU subfamily. A double ring-shaped homohexamer of HslV is capped on each side by a ring-shaped HslU homohexamer. The assembly of the HslU/HslV complex is dependent on binding of ATP.

It is found in the cytoplasm. In terms of biological role, ATPase subunit of a proteasome-like degradation complex; this subunit has chaperone activity. The binding of ATP and its subsequent hydrolysis by HslU are essential for unfolding of protein substrates subsequently hydrolyzed by HslV. HslU recognizes the N-terminal part of its protein substrates and unfolds these before they are guided to HslV for hydrolysis. The chain is ATP-dependent protease ATPase subunit HslU from Rickettsia rickettsii (strain Iowa).